The primary structure comprises 990 residues: F-box/LRR-repeat protein 15 (990 aa).

An F-box domain is found at 190 to 236; it reads FEVHIDLTDDLLHMVFSFLNHVDLCRSAMVCRQWRVASAHEDFWRVL. LRR repeat units lie at residues 237–258, 280–303, 317–341, 348–373, 397–423, 441–465, 466–477, 478–503, 519–542, 550–574, 589–612, 614–633, 640–652, 653–678, 734–756, 758–782, 785–809, 813–839, 882–893, 894–914, 915–937, and 949–973; these read NFENIRISMEQFENMCSRYPNA, LRNLEVLTIGKGHISESFFQALGE, LGNGAQEIHLSHDRLRELKITKCRV, CPQLRSLSLKRSNMSQAMLNCPLLQL, LESLDVSNCSCVSDETLREIAQACANL, LPMLTVLKLHSCEGITSASMTWIAN, SPALEVLELDNC, NLLTTVSLHLSRLQSISLVHCRKFTD, CPALRRITITSNALRRLALQKQEN, CHSLQEVDLSDCESLSNSVCKIFSD, CESLTAVRFCNSSLASLSLVGCRA, TSLELKCPRIEQICLDGCDH, QPVALRSLNLGIC, PKLSVLNIEAPYMVSLELKGCGVLSE, LPNLTVLDLSYTFLMNLEPVFKS, IQLKVLKLQACKYLTDSSLEPLYKE, LPALEELDLSYGTLCQTAIDDLLAC, LTHLSLNGCVNMHDLDWGSTSVHLFDY, FYHLSTLNLSLS, VNLKEVDLTCSNLVLLNLSNC, CSLEVLKLGCPRLASLFLQSCNM, and CSSLETLDLRFCPKISSVSMSKFRT.

The protein is F-box/LRR-repeat protein 15 (FBL15) of Arabidopsis thaliana (Mouse-ear cress).